The following is a 156-amino-acid chain: MGRIQRNKIKVEIKKLSHGKDLPLPCYATMQSAGMDLYAALGNSIVLNPLERLLIPTGIVIVIPNGFEGQIRPRSGLAAKYGITVLNSPGTIDSDYRGEVKVCLINLSNQPYEIKRGDRIAQILIAPVFRVIWDDAERLCTEETERSAGGFGSSGR.

Residues 74–76, Asn87, 91–93, and Lys101 each bind substrate; these read RSG and TID.

Belongs to the dUTPase family. It depends on Mg(2+) as a cofactor.

The catalysed reaction is dUTP + H2O = dUMP + diphosphate + H(+). It functions in the pathway pyrimidine metabolism; dUMP biosynthesis; dUMP from dCTP (dUTP route): step 2/2. Functionally, this enzyme is involved in nucleotide metabolism: it produces dUMP, the immediate precursor of thymidine nucleotides and it decreases the intracellular concentration of dUTP so that uracil cannot be incorporated into DNA. This is Deoxyuridine 5'-triphosphate nucleotidohydrolase from Wolbachia sp. subsp. Brugia malayi (strain TRS).